Here is a 337-residue protein sequence, read N- to C-terminus: Inositol 2-dehydrogenase 1 (337 aa).

This sequence belongs to the Gfo/Idh/MocA family. In terms of assembly, homotetramer.

It catalyses the reaction myo-inositol + NAD(+) = scyllo-inosose + NADH + H(+). Its function is as follows. Involved in the oxidation of myo-inositol (MI) to 2-keto-myo-inositol (2KMI or 2-inosose). In Paenarthrobacter aurescens (strain TC1), this protein is Inositol 2-dehydrogenase 1.